Here is a 186-residue protein sequence, read N- to C-terminus: Photosystem I assembly protein Ycf4 (186 aa).

Transmembrane regions (helical) follow at residues phenylalanine 22–serine 42 and isoleucine 57–serine 77.

Belongs to the Ycf4 family.

The protein localises to the plastid. It is found in the chloroplast thylakoid membrane. Functionally, seems to be required for the assembly of the photosystem I complex. This Dioscorea elephantipes (Elephant's foot yam) protein is Photosystem I assembly protein Ycf4.